A 539-amino-acid chain; its full sequence is Glycerophosphoinositol inositolphosphodiesterase GDPD2 (539 aa).

At Met-1–Trp-40 the chain is on the cytoplasmic side. Residues Phe-41–Leu-61 traverse the membrane as a helical segment. Topologically, residues Leu-62–Ser-83 are extracellular. A helical transmembrane segment spans residues Leu-84–Gly-104. At Leu-105–Lys-121 the chain is on the cytoplasmic side. The helical transmembrane segment at Val-122–Trp-142 threads the bilayer. Residues Arg-143–Gln-154 lie on the Extracellular side of the membrane. A helical transmembrane segment spans residues Ala-155–Val-175. Over Ala-176–Val-189 the chain is Cytoplasmic. The helical transmembrane segment at Leu-190–Ile-210 threads the bilayer. Topologically, residues Ser-211–Tyr-491 are extracellular. Residues Pro-225–Gln-480 enclose the GP-PDE domain. Glu-257, Asp-259, and His-272 together coordinate a divalent metal cation. Asn-333 carries N-linked (GlcNAc...) asparagine glycosylation. Residues Leu-492–Leu-512 traverse the membrane as a helical segment. The Cytoplasmic segment spans residues Arg-513–Glu-539.

It belongs to the glycerophosphoryl diester phosphodiesterase family. Ca(2+) serves as cofactor. Detected in spleen, femur and calvaria.

The protein resides in the cell membrane. The protein localises to the cytoplasm. It is found in the cytoskeleton. It carries out the reaction sn-glycero-3-phospho-1D-myo-inositol + H2O = 1D-myo-inositol 1-phosphate + glycerol + H(+). Has glycerophosphoinositol inositolphosphodiesterase activity and specifically hydrolyzes glycerophosphoinositol, with no activity for other substrates such as glycerophosphoinositol 4-phosphate, glycerophosphocholine, glycerophosphoethanolamine, and glycerophosphoserine. Accelerates the program of osteoblast differentiation and growth. May play a role in remodeling of the actin cytoskeleton. The protein is Glycerophosphoinositol inositolphosphodiesterase GDPD2 (Gdpd2) of Mus musculus (Mouse).